The primary structure comprises 197 residues: uncharacterized protein (197 aa).

A compositionally biased stretch (polar residues) spans 1–10 (MKNNYTSLKS). 2 disordered regions span residues 1–46 (MKNN…PPYS) and 54–73 (LVPE…NVER). The segment covering 18-37 (LKTGHEIDLEKGPLPEHNSE) has biased composition (basic and acidic residues). Polar residues predominate over residues 58–69 (DSSTGPTETANP). 2 helical membrane passes run 83 to 105 (NIYS…FTAW) and 120 to 142 (AFFV…EPGL).

It belongs to the WTF family.

It localises to the endoplasmic reticulum membrane. This is an uncharacterized protein from Schizosaccharomyces pombe (strain 972 / ATCC 24843) (Fission yeast).